A 247-amino-acid chain; its full sequence is Carboxy-S-adenosyl-L-methionine synthase (247 aa).

S-adenosyl-L-methionine contacts are provided by residues Tyr-39, 64–66 (GCS), 117–118 (DI), Asn-132, and Arg-199.

This sequence belongs to the class I-like SAM-binding methyltransferase superfamily. Cx-SAM synthase family. Homodimer.

The catalysed reaction is prephenate + S-adenosyl-L-methionine = carboxy-S-adenosyl-L-methionine + 3-phenylpyruvate + H2O. Catalyzes the conversion of S-adenosyl-L-methionine (SAM) to carboxy-S-adenosyl-L-methionine (Cx-SAM). This Aeromonas salmonicida (strain A449) protein is Carboxy-S-adenosyl-L-methionine synthase.